We begin with the raw amino-acid sequence, 118 residues long: MITNIIISLAVIFVILGAIISAVTAIGIIRLKDIYSRGHAAGKSATLGAIFLLFGTFLYFIATDGYINMQLIFGILFILITGPLSSHLIMRAAYNNKTPYTKDTKIDELKNEFKDKMI.

3 consecutive transmembrane segments (helical) span residues 9-29 (LAVI…IGII), 47-67 (LGAI…DGYI), and 69-89 (MQLI…SHLI).

This sequence belongs to the CPA3 antiporters (TC 2.A.63) subunit G family. In terms of assembly, may form a heterooligomeric complex that consists of seven subunits: mnhA1, mnhB1, mnhC1, mnhD1, mnhE1, mnhF1 and mnhG1.

The protein localises to the cell membrane. Mnh complex is a Na(+)/H(+) antiporter involved in Na(+) excretion. In Staphylococcus haemolyticus (strain JCSC1435), this protein is Na(+)/H(+) antiporter subunit G1 (mnhG1).